The primary structure comprises 612 residues: UPF0329 protein ECU05_1680/ECU11_0050 (612 aa).

The segment covering 304-330 (RQRREMEKKEEEKKKEEEKKKEEEKRK) has biased composition (basic and acidic residues). The tract at residues 304–424 (RQRREMEKKE…RKRYKIHRRV (121 aa)) is disordered. Residues 331 to 349 (EEKKKKKEEKKEEKKKKKE) show a composition bias toward basic residues. Residues 350-388 (EKKEEKKEEKKEEKKEEKKEEKKEEKKEEKSGKSLREGE) show a composition bias toward basic and acidic residues.

Belongs to the UPF0329 family.

This Encephalitozoon cuniculi (strain GB-M1) (Microsporidian parasite) protein is UPF0329 protein ECU05_1680/ECU11_0050.